A 418-amino-acid chain; its full sequence is Tyrosine--tRNA ligase (418 aa).

Tyr-35 lines the L-tyrosine pocket. A 'HIGH' region motif is present at residues 40–49 (PTAKSLHIGH). Residues Tyr-168 and Gln-172 each contribute to the L-tyrosine site. The 'KMSKS' region signature appears at 228–232 (KYGKT). Lys-231 serves as a coordination point for ATP. The 59-residue stretch at 352-410 (PTVVGAMVAAGVVDTKSGGRRAVAEGGAYLNNVKVADPDQRLTDDDFLCGRVALVRRGK) folds into the S4 RNA-binding domain.

Belongs to the class-I aminoacyl-tRNA synthetase family. TyrS type 1 subfamily. As to quaternary structure, homodimer.

Its subcellular location is the cytoplasm. The enzyme catalyses tRNA(Tyr) + L-tyrosine + ATP = L-tyrosyl-tRNA(Tyr) + AMP + diphosphate + H(+). Functionally, catalyzes the attachment of tyrosine to tRNA(Tyr) in a two-step reaction: tyrosine is first activated by ATP to form Tyr-AMP and then transferred to the acceptor end of tRNA(Tyr). This Cutibacterium acnes (strain DSM 16379 / KPA171202) (Propionibacterium acnes) protein is Tyrosine--tRNA ligase.